The following is a 100-amino-acid chain: C-X-C motif chemokine 2 (100 aa).

An N-terminal signal peptide occupies residues 1–27 (MAPPTCRLLSAALVLLLLLATNHQATG). 2 cysteine pairs are disulfide-bonded: C36–C62 and C38–C78.

It belongs to the intercrine alpha (chemokine CxC) family. In terms of assembly, homotetramer.

The protein localises to the secreted. Chemotactic for human polymorphonuclear leukocytes but does not induce chemokinesis or an oxidative burst. The sequence is that of C-X-C motif chemokine 2 (Cxcl2) from Mus musculus (Mouse).